The following is a 189-amino-acid chain: Interferon alpha-14 (189 aa).

The first 23 residues, 1–23 (MALPFALMMALVVLSCKSSCSLG), serve as a signal peptide directing secretion. 2 disulfide bridges follow: C24-C122 and C52-C162. N95 is a glycosylation site (N-linked (GlcNAc...) asparagine).

It belongs to the alpha/beta interferon family.

Its subcellular location is the secreted. Its function is as follows. Produced by macrophages, IFN-alpha have antiviral activities. Interferon stimulates the production of two enzymes: a protein kinase and an oligoadenylate synthetase. The protein is Interferon alpha-14 (IFNA14) of Homo sapiens (Human).